A 216-amino-acid polypeptide reads, in one-letter code: Adenylate kinase (216 aa).

Residue 10–15 (GAGKGT) coordinates ATP. Positions 30-59 (STGDMLRAAVNAGTEVGKRAKAVMDAGKLV) are NMP. AMP-binding positions include Thr31, Arg36, 57–59 (KLV), 85–88 (GFPR), and Gln92. Positions 126-163 (GRYTCAQCGTVYHDTDKVPVEEGVCDKCGSTHFKRRPD) are LID. Arg127 serves as a coordination point for ATP. Positions 130 and 133 each coordinate Zn(2+). Residue 136-137 (VY) coordinates ATP. Positions 150 and 153 each coordinate Zn(2+). Positions 160 and 172 each coordinate AMP. Ala200 is an ATP binding site.

This sequence belongs to the adenylate kinase family. Monomer.

The protein resides in the cytoplasm. It carries out the reaction AMP + ATP = 2 ADP. It participates in purine metabolism; AMP biosynthesis via salvage pathway; AMP from ADP: step 1/1. Functionally, catalyzes the reversible transfer of the terminal phosphate group between ATP and AMP. Plays an important role in cellular energy homeostasis and in adenine nucleotide metabolism. This is Adenylate kinase from Rhizobium etli (strain ATCC 51251 / DSM 11541 / JCM 21823 / NBRC 15573 / CFN 42).